A 294-amino-acid polypeptide reads, in one-letter code: Putative HTH-type transcriptional regulatory protein STK_12680 (294 aa).

The region spanning 123 to 175 is the HTH cro/C1-type domain; that stretch reads LKKKREEMGLSLGEVAQALGVSRISIYDYEREDSYVSIDIAEKLVELFGDDIL. Positions 134–153 form a DNA-binding region, H-T-H motif; sequence LGEVAQALGVSRISIYDYER.

This chain is Putative HTH-type transcriptional regulatory protein STK_12680, found in Sulfurisphaera tokodaii (strain DSM 16993 / JCM 10545 / NBRC 100140 / 7) (Sulfolobus tokodaii).